The following is a 299-amino-acid chain: Hemolysin C homolog (299 aa).

2 consecutive CBS domains span residues 80–142 (MVPR…NGRL) and 145–202 (LIRK…IDDE).

The protein belongs to the UPF0053 family. Hemolysin C subfamily.

The sequence is that of Hemolysin C homolog (tlyC) from Rickettsia rickettsii (strain Sheila Smith).